Consider the following 197-residue polypeptide: Nucleoid occlusion factor SlmA (197 aa).

Residues isoleucine 7–leucine 67 enclose the HTH tetR-type domain. Positions threonine 30–phenylalanine 49 form a DNA-binding region, H-T-H motif. A coiled-coil region spans residues aspartate 109–isoleucine 136.

It belongs to the nucleoid occlusion factor SlmA family. Homodimer. Interacts with FtsZ.

It is found in the cytoplasm. It localises to the nucleoid. In terms of biological role, required for nucleoid occlusion (NO) phenomenon, which prevents Z-ring formation and cell division over the nucleoid. Acts as a DNA-associated cell division inhibitor that binds simultaneously chromosomal DNA and FtsZ, and disrupts the assembly of FtsZ polymers. SlmA-DNA-binding sequences (SBS) are dispersed on non-Ter regions of the chromosome, preventing FtsZ polymerization at these regions. In Shewanella baltica (strain OS223), this protein is Nucleoid occlusion factor SlmA.